The primary structure comprises 358 residues: Histidinol-phosphate aminotransferase (358 aa).

Lys210 is subject to N6-(pyridoxal phosphate)lysine.

This sequence belongs to the class-II pyridoxal-phosphate-dependent aminotransferase family. Histidinol-phosphate aminotransferase subfamily. In terms of assembly, homodimer. Pyridoxal 5'-phosphate is required as a cofactor.

The enzyme catalyses L-histidinol phosphate + 2-oxoglutarate = 3-(imidazol-4-yl)-2-oxopropyl phosphate + L-glutamate. It participates in amino-acid biosynthesis; L-histidine biosynthesis; L-histidine from 5-phospho-alpha-D-ribose 1-diphosphate: step 7/9. The polypeptide is Histidinol-phosphate aminotransferase (Clostridium beijerinckii (strain ATCC 51743 / NCIMB 8052) (Clostridium acetobutylicum)).